We begin with the raw amino-acid sequence, 669 residues long: DNA ligase (669 aa).

NAD(+)-binding positions include 33 to 37 (DAEYD), 82 to 83 (SL), and Glu114. The active-site N6-AMP-lysine intermediate is the Lys116. Residues Arg137, Glu174, Lys291, and Lys315 each coordinate NAD(+). 4 residues coordinate Zn(2+): Cys409, Cys412, Cys427, and Cys433. Residues 593–669 (EIPQPLAGKV…QTEQDLLALL (77 aa)) enclose the BRCT domain.

It belongs to the NAD-dependent DNA ligase family. LigA subfamily. Mg(2+) serves as cofactor. Requires Mn(2+) as cofactor.

The enzyme catalyses NAD(+) + (deoxyribonucleotide)n-3'-hydroxyl + 5'-phospho-(deoxyribonucleotide)m = (deoxyribonucleotide)n+m + AMP + beta-nicotinamide D-nucleotide.. Functionally, DNA ligase that catalyzes the formation of phosphodiester linkages between 5'-phosphoryl and 3'-hydroxyl groups in double-stranded DNA using NAD as a coenzyme and as the energy source for the reaction. It is essential for DNA replication and repair of damaged DNA. The sequence is that of DNA ligase from Vibrio vulnificus (strain CMCP6).